The primary structure comprises 86 residues: ATP synthase subunit c (86 aa).

The next 2 helical transmembrane spans lie at 4-24 (AIVA…GIGA) and 57-77 (VAIA…LLFV).

Belongs to the ATPase C chain family. As to quaternary structure, F-type ATPases have 2 components, F(1) - the catalytic core - and F(0) - the membrane proton channel. F(1) has five subunits: alpha(3), beta(3), gamma(1), delta(1), epsilon(1). F(0) has three main subunits: a(1), b(2) and c(10-14). The alpha and beta chains form an alternating ring which encloses part of the gamma chain. F(1) is attached to F(0) by a central stalk formed by the gamma and epsilon chains, while a peripheral stalk is formed by the delta and b chains.

The protein resides in the cell membrane. In terms of biological role, f(1)F(0) ATP synthase produces ATP from ADP in the presence of a proton or sodium gradient. F-type ATPases consist of two structural domains, F(1) containing the extramembraneous catalytic core and F(0) containing the membrane proton channel, linked together by a central stalk and a peripheral stalk. During catalysis, ATP synthesis in the catalytic domain of F(1) is coupled via a rotary mechanism of the central stalk subunits to proton translocation. Key component of the F(0) channel; it plays a direct role in translocation across the membrane. A homomeric c-ring of between 10-14 subunits forms the central stalk rotor element with the F(1) delta and epsilon subunits. The sequence is that of ATP synthase subunit c from Clostridioides difficile (strain 630) (Peptoclostridium difficile).